Reading from the N-terminus, the 395-residue chain is Altered inheritance of mitochondria protein 39, mitochondrial (395 aa).

Residues 156-176 traverse the membrane as a helical segment; that stretch reads QIWSAIFGGIFGVILGYSLIY.

Belongs to the AIM39 family.

It localises to the mitochondrion membrane. The protein is Altered inheritance of mitochondria protein 39, mitochondrial (AIM39) of Saccharomyces cerevisiae (strain JAY291) (Baker's yeast).